A 227-amino-acid chain; its full sequence is Nodulation protein W (227 aa).

A Response regulatory domain is found at 21-135 (IVFVVEDDIS…ELLDAVVAAT (115 aa)). Asp70 is modified (4-aspartylphosphate). The HTH luxR-type domain maps to 151-216 (LKSLFETLSP…DLIRMSETLG (66 aa)). The H-T-H motif DNA-binding region spans 175 to 194 (NKQVAAELGLAEITVKIYRG).

Post-translationally, phosphorylated by NodV.

It is found in the cytoplasm. Functionally, member of the two-component regulatory system NodV/NodW probably involved in the regulation of the transcription of genes involved in the nodulation process. In Bradyrhizobium diazoefficiens (strain JCM 10833 / BCRC 13528 / IAM 13628 / NBRC 14792 / USDA 110), this protein is Nodulation protein W (nodW).